The following is a 453-amino-acid chain: Phenylalanine-4-hydroxylase (453 aa).

The residue at position 2 (A2) is an N-acetylalanine. Phosphoserine; by PKA is present on S16. In terms of domain architecture, ACT spans 36 to 114 (SLIFSLKEEV…TVHELSRDKE (79 aa)). Positions 285, 290, and 330 each coordinate Fe cation.

It belongs to the biopterin-dependent aromatic amino acid hydroxylase family. As to quaternary structure, homodimer and homotetramer. Fe(2+) serves as cofactor. In terms of processing, phosphorylation at Ser-16 increases basal activity and facilitates activation by the substrate phenylalanine.

It carries out the reaction (6R)-L-erythro-5,6,7,8-tetrahydrobiopterin + L-phenylalanine + O2 = (4aS,6R)-4a-hydroxy-L-erythro-5,6,7,8-tetrahydrobiopterin + L-tyrosine. It participates in amino-acid degradation; L-phenylalanine degradation; acetoacetate and fumarate from L-phenylalanine: step 1/6. With respect to regulation, N-terminal region of PAH is thought to contain allosteric binding sites for phenylalanine and to constitute an 'inhibitory' domain that regulates the activity of a catalytic domain in the C-terminal portion of the molecule. In terms of biological role, catalyzes the hydroxylation of L-phenylalanine to L-tyrosine. This Rattus norvegicus (Rat) protein is Phenylalanine-4-hydroxylase (Pah).